The chain runs to 549 residues: E-selectin (549 aa).

The first 21 residues, 1-21 (MNASCFLSALTFVLLIGKSIA), serve as a signal peptide directing secretion. The 118-residue stretch at 22-139 (WYYNASSELM…CDKKKLALCY (118 aa)) folds into the C-type lectin domain. The Extracellular segment spans residues 22–494 (WYYNASSELM…CEAPANPPRP (473 aa)). N-linked (GlcNAc...) asparagine glycans are attached at residues Asn-25 and Asn-60. 17 disulfide bridges follow: Cys-40–Cys-138, Cys-111–Cys-130, Cys-143–Cys-154, Cys-148–Cys-163, Cys-165–Cys-174, Cys-180–Cys-225, Cys-193–Cys-206, Cys-210–Cys-238, Cys-243–Cys-287, Cys-256–Cys-269, Cys-273–Cys-300, Cys-305–Cys-350, Cys-336–Cys-363, Cys-368–Cys-413, Cys-399–Cys-426, Cys-431–Cys-472, and Cys-458–Cys-485. Positions 101, 103, and 109 each coordinate Ca(2+). Residues 101 to 109 (EPNNKQRNE), 113 to 118 (EIYIQR), and 126 to 128 (NDE) each bind a carbohydrate. Positions 126 and 127 each coordinate Ca(2+). One can recognise an EGF-like domain in the interval 140–175 (TASCTNTSCSGHGECVETINSYTCKCHPGFLGPKCD). Residue Asn-145 is glycosylated (N-linked (GlcNAc...) asparagine). Sushi domains lie at 178-240 (VTCQ…ACHV), 241-302 (VECK…SCKA), 303-365 (VTCD…VCKA), 366-428 (SQCE…TCAG), and 429-487 (VQCS…TCEA). N-linked (GlcNAc...) asparagine glycosylation is found at Asn-192 and Asn-203. The N-linked (GlcNAc...) asparagine glycan is linked to Asn-266. N-linked (GlcNAc...) asparagine glycans are attached at residues Asn-313, Asn-320, and Asn-333. 2 N-linked (GlcNAc...) asparagine glycosylation sites follow: Asn-441 and Asn-465. Residues 495–516 (LVVALSVAATSLLTLSSLIYVL) traverse the membrane as a helical segment. Residues 517 to 549 (KRFFWKKAKKFVPASSCQSLQSFENYQGPSYII) lie on the Cytoplasmic side of the membrane.

It belongs to the selectin/LECAM family. As to quaternary structure, interacts with SELPLG/PSGL1 and PODXL2 through the sialyl Lewis X epitope. SELPLG sulfation appears not to be required for this interaction.

It is found in the cell membrane. Functionally, cell-surface glycoprotein having a role in immunoadhesion. Mediates in the adhesion of blood neutrophils in cytokine-activated endothelium through interaction with SELPLG/PSGL1. May have a role in capillary morphogenesis. The polypeptide is E-selectin (Sele) (Rattus norvegicus (Rat)).